The chain runs to 1046 residues: UDP-N-acetylglucosamine--peptide N-acetylglucosaminyltransferase 110 kDa subunit (1046 aa).

N-acetylalanine is present on Ala-2. Ser-3 and Ser-4 each carry phosphoserine; by GSK3-beta; alternate. Ser-3 and Ser-4 each carry an O-linked (GlcNAc) serine; alternate glycan. A Phosphoserine modification is found at Ser-20. TPR repeat units lie at residues 21 to 54 (FQGLAELAHREYQAGDFEAAERHCMQLWRQEPDN), 89 to 122 (AEAYSNLGNVYKERGQLQEAIEHYRHALRLKPDF), 123 to 156 (IDGYINLAAALVAAGDMEGAVQAYVSALQYNPDL), 157 to 190 (YCVRSDLGNLLKALGRLEEAKACYLKAIETQPNF), 191 to 224 (AVAWSNLGCVFNAQGEIWLAIHHFEKAVTLDPNF), 225 to 258 (LDAYINLGNVLKEARIFDRAVAAYLRALSLSPNH), 259 to 292 (AVVHGNLACVYYEQGLIDLAIDTYRRAIELQPHF), 293 to 326 (PDAYCNLANALKEKGSVAEAEDCYNTALRLCPTH), 327 to 360 (ADSLNNLANIKREQGNIEEAVRLYRKALEVFPEF), 361 to 394 (AAAHSNLASVLQQQGKLQEALMHYKEAIRISPTF), 395 to 428 (ADAYSNMGNTLKEMQDVQGALQCYTRAIQINPAF), and 429 to 462 (ADAHSNLASIHKDSGNIPEAIASYRTALKLKPDF). A glycan (O-linked (GlcNAc) serine; by autocatalysis) is linked at Ser-399. At Thr-454 the chain carries Phosphothreonine. The stretch at 463–473 (PDAYCNLAHCL) is one TPR 13; truncated repeat. The DFP motif motif lies at 464–466 (DAY). Positions 487 to 503 (KKLVSIVADQLEKNRLP) match the Nuclear localization signal motif. His-508 serves as the catalytic Proton acceptor. UDP-binding positions include Gln-849, Lys-852, 906–908 (APK), 911–914 (HVRR), 930–932 (HTT), and Asp-935. Tyr-989 carries the post-translational modification Phosphotyrosine. The segment at 991–1010 (KKIRGKVWKQRISSPLFNTK) is required for phosphatidylinositol 3,4,5-triphosphate binding.

The protein belongs to the glycosyltransferase 41 family. O-GlcNAc transferase subfamily. As to quaternary structure, monomer; may exist in different oligomerization states in cells. Homotrimer, oligomerizes via TPR repeats 6 and 7. Trimerization is not necessary for activity in vitro, however it increases affinity for UDP-GlcNAc. Component of a THAP1/THAP3-HCFC1-OGT complex. Component of the NSL complex at least composed of MOF/KAT8, KANSL1, KANSL2, KANSL3, MCRS1, PHF20, OGT1/OGT, WDR5 and HCFC1. Found in a complex with KIF5B, RHOT1, RHOT2 and TRAK1. Found in a complex composed of at least SINHCAF, SIN3A, HDAC1, SAP30, RBBP4, OGT and TET1. Component of a complex composed of KMT2E/MLL5, OGT and USP7; the complex stabilizes KMT2E/MLL5, preventing KMT2E/MLL5 ubiquitination and proteasomal-mediated degradation. Interacts (via TPRs 1-6) with SIN3A; the interaction mediates transcriptional repression in parallel with histone deacetylase. Interacts (via TPR 5-6) with TET1, TET2 and TET3. Interacts (via TPR repeats 6 and 7) with ATXN10. Interacts with NSD2. Interacts with PROSER1; this interaction mediates TET2 O-GlcNAcylation and stability by promoting the interaction between OGT and TET2. Ubiquitinated by the SCF(FBXO31) complex, leading to its proteasomal degradation. Post-translationally, phosphorylation on Ser-3 or Ser-4 by GSK3-beta positively regulates its activity. Phosphorylation at Thr-454 by AMPK promotes nuclear localization. In terms of processing, glycosylated via autocatalysis; O-GlcNAcylation at Ser-399 promotes nuclear localization.

The protein resides in the nucleus. It localises to the cytoplasm. It catalyses the reaction L-seryl-[protein] + UDP-N-acetyl-alpha-D-glucosamine = 3-O-(N-acetyl-beta-D-glucosaminyl)-L-seryl-[protein] + UDP + H(+). The enzyme catalyses L-threonyl-[protein] + UDP-N-acetyl-alpha-D-glucosamine = 3-O-(N-acetyl-beta-D-glucosaminyl)-L-threonyl-[protein] + UDP + H(+). It participates in protein modification; protein glycosylation. Its activity is regulated as follows. Subject to product inhibition by UDP. In terms of biological role, catalyzes the transfer of a single N-acetylglucosamine from UDP-GlcNAc to a serine or threonine residue in cytoplasmic and nuclear proteins resulting in their modification with a beta-linked N-acetylglucosamine (O-GlcNAc). Glycosylates a large and diverse number of proteins including histone H2B, AKT1, AMPK, ATG4B, CAPRIN1, EZH2, FNIP1, GSDMD, KRT7, LMNA, LMNB1, LMNB2, RPTOR, HOXA1, PFKL, KMT2E/MLL5, MAPT/TAU, TET2, RBL2, RET, NOD2 and HCFC1. Can regulate their cellular processes via cross-talk between glycosylation and phosphorylation or by affecting proteolytic processing. Involved in insulin resistance in muscle and adipocyte cells via glycosylating insulin signaling components and inhibiting the 'Thr-308' phosphorylation of AKT1, enhancing IRS1 phosphorylation and attenuating insulin signaling. Involved in glycolysis regulation by mediating glycosylation of 6-phosphofructokinase PFKL, inhibiting its activity. Plays a key role in chromatin structure by mediating O-GlcNAcylation of 'Ser-112' of histone H2B: recruited to CpG-rich transcription start sites of active genes via its interaction with TET proteins (TET1, TET2 or TET3). As part of the NSL complex indirectly involved in acetylation of nucleosomal histone H4 on several lysine residues. O-GlcNAcylation of 'Ser-75' of EZH2 increases its stability, and facilitating the formation of H3K27me3 by the PRC2/EED-EZH2 complex. Stabilizes KMT2E/MLL5 by mediating its glycosylation, thereby preventing KMT2E/MLL5 ubiquitination. Regulates circadian oscillation of the clock genes and glucose homeostasis in the liver. Stabilizes clock proteins BMAL1 and CLOCK through O-glycosylation, which prevents their ubiquitination and subsequent degradation. Promotes the CLOCK-BMAL1-mediated transcription of genes in the negative loop of the circadian clock such as PER1/2 and CRY1/2. O-glycosylates HCFC1 and regulates its proteolytic processing and transcriptional activity. Component of a THAP1/THAP3-HCFC1-OGT complex that is required for the regulation of the transcriptional activity of RRM1. Regulates mitochondrial motility in neurons by mediating glycosylation of TRAK1. Promotes autophagy by mediating O-glycosylation of ATG4B. Acts as a regulator of mTORC1 signaling by mediating O-glycosylation of RPTOR and FNIP1: O-GlcNAcylation of RPTOR in response to glucose sufficiency promotes activation of the mTORC1 complex. The sequence is that of UDP-N-acetylglucosamine--peptide N-acetylglucosaminyltransferase 110 kDa subunit (OGT) from Sus scrofa (Pig).